Here is a 232-residue protein sequence, read N- to C-terminus: Ubiquinone biosynthesis O-methyltransferase (232 aa).

4 residues coordinate S-adenosyl-L-methionine: Arg36, Gly55, Asp76, and Met120.

This sequence belongs to the methyltransferase superfamily. UbiG/COQ3 family.

The catalysed reaction is a 3-demethylubiquinol + S-adenosyl-L-methionine = a ubiquinol + S-adenosyl-L-homocysteine + H(+). The enzyme catalyses a 3-(all-trans-polyprenyl)benzene-1,2-diol + S-adenosyl-L-methionine = a 2-methoxy-6-(all-trans-polyprenyl)phenol + S-adenosyl-L-homocysteine + H(+). Its pathway is cofactor biosynthesis; ubiquinone biosynthesis. Its function is as follows. O-methyltransferase that catalyzes the 2 O-methylation steps in the ubiquinone biosynthetic pathway. The sequence is that of Ubiquinone biosynthesis O-methyltransferase from Thiobacillus denitrificans (strain ATCC 25259 / T1).